We begin with the raw amino-acid sequence, 716 residues long: MAAKSKTPPPVDSLTRSQARVEHKRLALEIETHNERYYQQDAPTVSDATYDALQRRLEAIEARFPDLVTASSPTQTVGAAPARGFAKVQHAVPMLSLGNAFSDAEVAEFVERIRRFLKLGADDMPAIVAEPKIDGLSLSLRYENGDLVRAATRGDGFTGEDVTANVRTIADVPHKLNGHNIPTACELRGEVYMLKEDFLALNKKQQEAGDTVFANPRNSAAGSLRQKDVSITASRPLKFFAYAWGEMTDRPAETQNDMLEWLRDVGFIVNPLIQLCHSVDEVLAFYRRIGEQRATLGYDIDGVVYKVDRLDWQERLGFVSRSPRWAIAHKFAAEQAMTILRGIDIQVGRTGAMTPVARLEPVTVGGVVVQNATLHNEDYIRGLGNDGQPIRDGIDLRIGDTVVVQRAGDVIPQVVSVIIEKRPANAKRYEFPDRCPICGSHAVREEGEAVRRCTGALICPAQAVERLKHFVSRLAFDIDGLGEKQIQEFYDDGLVMHPVDIFTLQERDARAENKLRDRDGYGDVSVRNLFAAIDARRRIELNRLIFALGIRHVGEGNAKLLARHYGSIESFRSAMTEAAAAQTEAGNDSEAYADLTNIGGIGDIVADAVVEFFAEPRNVKALNDLLEEIEVLPVAQARSDSAVAGKTVVFTGSLEKFTRDEAKASAERVGAKTSSSVSKKTDLVVAGPGAGSKLKDAEKFGVKVISEDEWLKLIEG.

NAD(+)-binding positions include 47 to 51 (DATYD), 96 to 97 (SL), and glutamate 130. Lysine 132 functions as the N6-AMP-lysine intermediate in the catalytic mechanism. 4 residues coordinate NAD(+): arginine 153, glutamate 190, lysine 306, and lysine 330. 4 residues coordinate Zn(2+): cysteine 435, cysteine 438, cysteine 453, and cysteine 459. The region spanning 638 to 716 (RSDSAVAGKT…EDEWLKLIEG (79 aa)) is the BRCT domain.

The protein belongs to the NAD-dependent DNA ligase family. LigA subfamily. It depends on Mg(2+) as a cofactor. Requires Mn(2+) as cofactor.

The enzyme catalyses NAD(+) + (deoxyribonucleotide)n-3'-hydroxyl + 5'-phospho-(deoxyribonucleotide)m = (deoxyribonucleotide)n+m + AMP + beta-nicotinamide D-nucleotide.. Functionally, DNA ligase that catalyzes the formation of phosphodiester linkages between 5'-phosphoryl and 3'-hydroxyl groups in double-stranded DNA using NAD as a coenzyme and as the energy source for the reaction. It is essential for DNA replication and repair of damaged DNA. The polypeptide is DNA ligase (Nitrobacter winogradskyi (strain ATCC 25391 / DSM 10237 / CIP 104748 / NCIMB 11846 / Nb-255)).